Consider the following 464-residue polypeptide: E3 ubiquitin-protein ligase ITT1 (464 aa).

Positions 176–455 (SNYHCCICME…EAYSGCYGRL (280 aa)) are TRIAD supradomain. Residues cysteine 180, cysteine 183, cysteine 207, cysteine 210, cysteine 290, cysteine 300, cysteine 316, cysteine 319, cysteine 402, and cysteine 405 each coordinate Zn(2+). An RING-type 1 zinc finger spans residues 180–236 (CCICMEMEKGVRMIKLPCENANVEHYLCRGCAKSYFTAMIQENRISSVRCPQCEYKE). The IBR-type zinc-finger motif lies at 267 to 338 (DTELCERYEK…HAWHGYNNKC (72 aa)). Residues 402–431 (CPKCKVVVERSEGCNKMKCEVCGTLFCFIC) form an RING-type 2; atypical zinc finger. Cysteine 415 is a catalytic residue. Zn(2+)-binding residues include cysteine 420, cysteine 423, cysteine 428, cysteine 431, histidine 443, and cysteine 451.

It belongs to the RBR family. RNF14 subfamily. In terms of assembly, interacts with translation release factors eRF1 (SUP45) and eRF3 (SUP35) in vitro.

It catalyses the reaction [E2 ubiquitin-conjugating enzyme]-S-ubiquitinyl-L-cysteine + [acceptor protein]-L-lysine = [E2 ubiquitin-conjugating enzyme]-L-cysteine + [acceptor protein]-N(6)-ubiquitinyl-L-lysine.. It functions in the pathway protein modification; protein ubiquitination. In terms of biological role, E3 ubiquitin-protein ligase involved in translation quality control. Involved in the rescue of stalled ribosomes by promoting ubiquitination and degradation of proteins on stalled ribosomes. Specifically required to resolve RNA-protein cross-links caused by reactive aldehydes, which trigger translation stress by stalling ribosomes: acts by catalying 'Lys-6'-linked ubiquitination of RNA-protein cross-links, leading to their degradation. Interacts with the translation termination factors eRF1 (SUP45) and eRF3 (SUP35); overexpression decreases the efficiency of translation termination. The chain is E3 ubiquitin-protein ligase ITT1 from Saccharomyces cerevisiae (strain ATCC 204508 / S288c) (Baker's yeast).